A 284-amino-acid polypeptide reads, in one-letter code: 4-hydroxy-3-methylbut-2-enyl diphosphate reductase (284 aa).

Cys-12 provides a ligand contact to [4Fe-4S] cluster. (2E)-4-hydroxy-3-methylbut-2-enyl diphosphate-binding residues include His-40 and His-72. His-40 and His-72 together coordinate dimethylallyl diphosphate. Isopentenyl diphosphate contacts are provided by His-40 and His-72. A [4Fe-4S] cluster-binding site is contributed by Cys-94. His-122 provides a ligand contact to (2E)-4-hydroxy-3-methylbut-2-enyl diphosphate. His-122 lines the dimethylallyl diphosphate pocket. His-122 serves as a coordination point for isopentenyl diphosphate. Glu-124 (proton donor) is an active-site residue. Thr-161 lines the (2E)-4-hydroxy-3-methylbut-2-enyl diphosphate pocket. Position 193 (Cys-193) interacts with [4Fe-4S] cluster. Positions 221, 223, and 264 each coordinate (2E)-4-hydroxy-3-methylbut-2-enyl diphosphate. Dimethylallyl diphosphate-binding residues include Ser-221, Asn-223, and Ser-264. Ser-221, Asn-223, and Ser-264 together coordinate isopentenyl diphosphate.

It belongs to the IspH family. It depends on [4Fe-4S] cluster as a cofactor.

It carries out the reaction isopentenyl diphosphate + 2 oxidized [2Fe-2S]-[ferredoxin] + H2O = (2E)-4-hydroxy-3-methylbut-2-enyl diphosphate + 2 reduced [2Fe-2S]-[ferredoxin] + 2 H(+). The catalysed reaction is dimethylallyl diphosphate + 2 oxidized [2Fe-2S]-[ferredoxin] + H2O = (2E)-4-hydroxy-3-methylbut-2-enyl diphosphate + 2 reduced [2Fe-2S]-[ferredoxin] + 2 H(+). It participates in isoprenoid biosynthesis; dimethylallyl diphosphate biosynthesis; dimethylallyl diphosphate from (2E)-4-hydroxy-3-methylbutenyl diphosphate: step 1/1. The protein operates within isoprenoid biosynthesis; isopentenyl diphosphate biosynthesis via DXP pathway; isopentenyl diphosphate from 1-deoxy-D-xylulose 5-phosphate: step 6/6. In terms of biological role, catalyzes the conversion of 1-hydroxy-2-methyl-2-(E)-butenyl 4-diphosphate (HMBPP) into a mixture of isopentenyl diphosphate (IPP) and dimethylallyl diphosphate (DMAPP). Acts in the terminal step of the DOXP/MEP pathway for isoprenoid precursor biosynthesis. This Dehalococcoides mccartyi (strain CBDB1) protein is 4-hydroxy-3-methylbut-2-enyl diphosphate reductase.